Here is a 297-residue protein sequence, read N- to C-terminus: Cyclin-dependent kinase 1 (297 aa).

The Protein kinase domain occupies 4-287 (FEKIEKIGEG…AKDILEHPYF (284 aa)). ATP is bound by residues 10 to 18 (IGEGTYGVV) and Lys33. Residue Thr14 is modified to Phosphothreonine. At Tyr15 the chain carries Phosphotyrosine. The Proton acceptor role is filled by Asp128. The residue at position 160 (Tyr160) is a Phosphotyrosine. Residue Thr161 is modified to Phosphothreonine; by CAK.

The protein belongs to the protein kinase superfamily. CMGC Ser/Thr protein kinase family. CDC2/CDKX subfamily. In terms of assembly, forms a stable but non-covalent complex with a regulatory subunit and with a cyclin. Component of the Frs-CycA-Cdk1 complex composed of Cdk1, CycA and Z600.

Its subcellular location is the nucleus. It catalyses the reaction L-seryl-[protein] + ATP = O-phospho-L-seryl-[protein] + ADP + H(+). It carries out the reaction L-threonyl-[protein] + ATP = O-phospho-L-threonyl-[protein] + ADP + H(+). The enzyme catalyses [DNA-directed RNA polymerase] + ATP = phospho-[DNA-directed RNA polymerase] + ADP + H(+). Its activity is regulated as follows. Phosphorylation at Thr-14 or Tyr-15 inactivates the enzyme, while phosphorylation at Thr-161 activates it. Plays a key role in the control of the eukaryotic cell cycle. Required for entry into S-phase and mitosis. In embryos, promotes the release of Rif1 from chromatin during mid-blastula transition. p34 is a component of the kinase complex that phosphorylates the repetitive C-terminus of RNA polymerase II. This is Cyclin-dependent kinase 1 from Drosophila melanogaster (Fruit fly).